The primary structure comprises 566 residues: MNDSIQLSGLSRQLVQANLLDEKTAVQAQAQAQRNKLSLVTHLVQSKLVSGLALAELSAEQFGIAYCDLNSLDKESFPRDAISEKLVRQHRVIPLWRRGNKLFVGISDPANHQAINDVQFSTGLTTEAILVEDDKLGLAIDKLFESATDGLAGLDDVDLEGLDIGSADKSTQEDASAEADDAPVVRFVNKMLLDAIKGGSSDLHFEPYEKIYRVRFRTDGMLHEVAKPPIQLASRISARLKVMAGLDISERRKPQDGRIKMRVSKTKSIDFRVNTLPTLWGEKIVMRILDSSSAQMGIDALGYEEDQKELYLAALKQPQGMILVTGPTGSGKTVSLYTGLNILNTTDINISTAEDPVEINLEGINQVNVNPRQGMDFSQALRAFLRQDPDVIMVGEIRDLETAEIAIKAAQTGHMVMSTLHTNSAAETLTRLLNMGVPAFNLATSVNLIIAQRLARKLCSHCKKEHEVPRETLLHEGFPEDKIGTFKLYSPVGCDHCKNGYKGRVGIYEVVKNTPALQRIIMEEGNSIEIAEQARKEGFNDLRTSGLLKAMQGITSLEEVNRVTKD.

326-333 serves as a coordination point for ATP; that stretch reads GPTGSGKT. Cys-459, Cys-462, Cys-494, and Cys-497 together coordinate Zn(2+).

The protein belongs to the GSP E family. In terms of assembly, homohexamer. Interacts with PilC. Interacts with FimX; this interaction positively regulates T4P assembly and twitching motility by promoting the activity of the PilB ATPase.

It localises to the cytoplasm. In terms of biological role, ATPase component of the type IV pilus (T4P) that plays a role in surface and host cell adhesion, colonization, biofilm maturation, virulence, and twitching, a form of surface-associated motility facilitated by cycles of extension, adhesion, and retraction of T4P fibers. Acts as a molecular motor to provide the energy that is required for biogenesis of the pilus and the extrusion of substrates generated in the cytoplasm. PilB ATPase activity is also essential for T4P extension while antagonist PilT ATPase activity is required for T4P retraction. This is Type IV pilus assembly ATPase PilB (pilB) from Pseudomonas aeruginosa (strain ATCC 15692 / DSM 22644 / CIP 104116 / JCM 14847 / LMG 12228 / 1C / PRS 101 / PAO1).